A 433-amino-acid chain; its full sequence is MSLMTKLGFRALVASCLIAAGGAAHAQVNVLITGVGSTQFPIATANFVNEASLPQQVTSIVRADLARSGKFTNVDAGGTPVPETASVDFGAWKAKGANAFVAGSVSREPNGQYKVNFILYDTVKQQSLGGLSLTTSNDNEGMRKTGHKIADYIYQKLLGVRGVFNTRLSYVQRTGNVYKLLISDSDGQNAIPALTSKEPIISPAWSPSGTKVAYVSFELRKPVVYIHDLPTGRRYVISNQKGNNSAPAWSPDGQTLAVALSLTGNTQIYSVSSTGSGLHRLTRSSSIDTEPFYSPDGKWIYFTSDRGGAPQIYRMPAGGESAGAAQRVTFTGSYNTSPRISPDGKLLAYISRTGGGFKLYVQDLQTGAANAVTNTTRDESPSFAANGQYILYATQSGGRSVLAAVPSDGSAPPQILSVQGGAIREPSWGPFMQ.

The first 26 residues, 1-26, serve as a signal peptide directing secretion; it reads MSLMTKLGFRALVASCLIAAGGAAHA.

This sequence belongs to the TolB family. As to quaternary structure, the Tol-Pal system is composed of five core proteins: the inner membrane proteins TolA, TolQ and TolR, the periplasmic protein TolB and the outer membrane protein Pal. They form a network linking the inner and outer membranes and the peptidoglycan layer.

Its subcellular location is the periplasm. Part of the Tol-Pal system, which plays a role in outer membrane invagination during cell division and is important for maintaining outer membrane integrity. This chain is Tol-Pal system protein TolB, found in Burkholderia thailandensis (strain ATCC 700388 / DSM 13276 / CCUG 48851 / CIP 106301 / E264).